Here is a 311-residue protein sequence, read N- to C-terminus: 4-diphosphocytidyl-2-C-methyl-D-erythritol kinase (311 aa).

Lys16 is a catalytic residue. 100 to 110 is an ATP binding site; that stretch reads PIGAGLAGGSS. Asp142 is an active-site residue.

Belongs to the GHMP kinase family. IspE subfamily.

The catalysed reaction is 4-CDP-2-C-methyl-D-erythritol + ATP = 4-CDP-2-C-methyl-D-erythritol 2-phosphate + ADP + H(+). The protein operates within isoprenoid biosynthesis; isopentenyl diphosphate biosynthesis via DXP pathway; isopentenyl diphosphate from 1-deoxy-D-xylulose 5-phosphate: step 3/6. Catalyzes the phosphorylation of the position 2 hydroxy group of 4-diphosphocytidyl-2C-methyl-D-erythritol. This chain is 4-diphosphocytidyl-2-C-methyl-D-erythritol kinase, found in Prochlorococcus marinus (strain AS9601).